A 424-amino-acid polypeptide reads, in one-letter code: Dual-specificity RNA methyltransferase RlmN (424 aa).

Glutamate 132 (proton acceptor) is an active-site residue. One can recognise a Radical SAM core domain in the interval 138–388 (GPDRGTLCVS…VRTPRGRDIL (251 aa)). An intrachain disulfide couples cysteine 145 to cysteine 391. Residues cysteine 152, cysteine 156, and cysteine 159 each coordinate [4Fe-4S] cluster. Residues 217–218 (GE), serine 249, 271–273 (SLH), and asparagine 348 contribute to the S-adenosyl-L-methionine site. Cysteine 391 functions as the S-methylcysteine intermediate in the catalytic mechanism.

It belongs to the radical SAM superfamily. RlmN family. Requires [4Fe-4S] cluster as cofactor.

The protein localises to the cytoplasm. The catalysed reaction is adenosine(2503) in 23S rRNA + 2 reduced [2Fe-2S]-[ferredoxin] + 2 S-adenosyl-L-methionine = 2-methyladenosine(2503) in 23S rRNA + 5'-deoxyadenosine + L-methionine + 2 oxidized [2Fe-2S]-[ferredoxin] + S-adenosyl-L-homocysteine. It catalyses the reaction adenosine(37) in tRNA + 2 reduced [2Fe-2S]-[ferredoxin] + 2 S-adenosyl-L-methionine = 2-methyladenosine(37) in tRNA + 5'-deoxyadenosine + L-methionine + 2 oxidized [2Fe-2S]-[ferredoxin] + S-adenosyl-L-homocysteine. Specifically methylates position 2 of adenine 2503 in 23S rRNA and position 2 of adenine 37 in tRNAs. m2A2503 modification seems to play a crucial role in the proofreading step occurring at the peptidyl transferase center and thus would serve to optimize ribosomal fidelity. The sequence is that of Dual-specificity RNA methyltransferase RlmN from Methylobacterium radiotolerans (strain ATCC 27329 / DSM 1819 / JCM 2831 / NBRC 15690 / NCIMB 10815 / 0-1).